A 201-amino-acid chain; its full sequence is Inosine triphosphate pyrophosphatase (201 aa).

16 to 21 (TGNAKK) is an ITP binding site. Residue Glu-44 coordinates Mg(2+). ITP is bound by residues Lys-56, 72–73 (DT), Lys-89, 148–151 (FGWD), Lys-171, and 176–177 (HR).

This sequence belongs to the HAM1 NTPase family. In terms of assembly, homodimer. It depends on Mg(2+) as a cofactor. Requires Mn(2+) as cofactor.

The protein localises to the cytoplasm. The catalysed reaction is ITP + H2O = IMP + diphosphate + H(+). It carries out the reaction dITP + H2O = dIMP + diphosphate + H(+). It catalyses the reaction XTP + H2O = XMP + diphosphate + H(+). Pyrophosphatase that hydrolyzes non-canonical purine nucleotides such as inosine triphosphate (ITP), deoxyinosine triphosphate (dITP) or xanthosine 5'-triphosphate (XTP) to their respective monophosphate derivatives. The enzyme does not distinguish between the deoxy- and ribose forms. Probably excludes non-canonical purines from RNA and DNA precursor pools, thus preventing their incorporation into RNA and DNA and avoiding chromosomal lesions. This chain is Inosine triphosphate pyrophosphatase, found in Sorghum bicolor (Sorghum).